Consider the following 883-residue polypeptide: Alanine--tRNA ligase (883 aa).

Residues H570, H574, C672, and H676 each contribute to the Zn(2+) site.

This sequence belongs to the class-II aminoacyl-tRNA synthetase family. It depends on Zn(2+) as a cofactor.

It localises to the cytoplasm. It carries out the reaction tRNA(Ala) + L-alanine + ATP = L-alanyl-tRNA(Ala) + AMP + diphosphate. In terms of biological role, catalyzes the attachment of alanine to tRNA(Ala) in a two-step reaction: alanine is first activated by ATP to form Ala-AMP and then transferred to the acceptor end of tRNA(Ala). Also edits incorrectly charged Ser-tRNA(Ala) and Gly-tRNA(Ala) via its editing domain. This chain is Alanine--tRNA ligase, found in Heliobacterium modesticaldum (strain ATCC 51547 / Ice1).